The primary structure comprises 496 residues: Lysine--tRNA ligase (496 aa).

2 residues coordinate Mg(2+): glutamate 409 and glutamate 416.

It belongs to the class-II aminoacyl-tRNA synthetase family. As to quaternary structure, homodimer. The cofactor is Mg(2+).

It is found in the cytoplasm. The enzyme catalyses tRNA(Lys) + L-lysine + ATP = L-lysyl-tRNA(Lys) + AMP + diphosphate. In Streptococcus sanguinis (strain SK36), this protein is Lysine--tRNA ligase.